The primary structure comprises 92 residues: Large ribosomal subunit protein bL25 (92 aa).

The protein belongs to the bacterial ribosomal protein bL25 family. Part of the 50S ribosomal subunit; part of the 5S rRNA/L5/L18/L25 subcomplex. Contacts the 5S rRNA. Binds to the 5S rRNA independently of L5 and L18.

In terms of biological role, this is one of the proteins that binds to the 5S RNA in the ribosome where it forms part of the central protuberance. This chain is Large ribosomal subunit protein bL25, found in Vibrio vulnificus (strain CMCP6).